Consider the following 750-residue polypeptide: Photosystem I P700 chlorophyll a apoprotein A1 (750 aa).

A run of 8 helical transmembrane segments spans residues Val-70–Ala-93, Leu-156–His-179, Leu-195–Leu-219, Ile-291–Tyr-309, Trp-346–Tyr-369, Leu-385–Val-411, Ala-433–His-455, and Phe-531–Leu-549. The [4Fe-4S] cluster site is built by Cys-573 and Cys-582. A run of 2 helical transmembrane segments spans residues His-589–Trp-610 and Leu-664–Phe-686. Position 675 (His-675) interacts with chlorophyll a'. Positions 683 and 691 each coordinate chlorophyll a. Trp-692 serves as a coordination point for phylloquinone. The helical transmembrane segment at Ala-724–Ala-744 threads the bilayer.

This sequence belongs to the PsaA/PsaB family. The PsaA/B heterodimer binds the P700 chlorophyll special pair and subsequent electron acceptors. PSI consists of a core antenna complex that captures photons, and an electron transfer chain that converts photonic excitation into a charge separation. The eukaryotic PSI reaction center is composed of at least 11 subunits. P700 is a chlorophyll a/chlorophyll a' dimer, A0 is one or more chlorophyll a, A1 is one or both phylloquinones and FX is a shared 4Fe-4S iron-sulfur center. serves as cofactor.

It localises to the plastid. The protein localises to the chloroplast thylakoid membrane. It catalyses the reaction reduced [plastocyanin] + hnu + oxidized [2Fe-2S]-[ferredoxin] = oxidized [plastocyanin] + reduced [2Fe-2S]-[ferredoxin]. In terms of biological role, psaA and PsaB bind P700, the primary electron donor of photosystem I (PSI), as well as the electron acceptors A0, A1 and FX. PSI is a plastocyanin-ferredoxin oxidoreductase, converting photonic excitation into a charge separation, which transfers an electron from the donor P700 chlorophyll pair to the spectroscopically characterized acceptors A0, A1, FX, FA and FB in turn. Oxidized P700 is reduced on the lumenal side of the thylakoid membrane by plastocyanin. The sequence is that of Photosystem I P700 chlorophyll a apoprotein A1 from Arabidopsis thaliana (Mouse-ear cress).